The primary structure comprises 345 residues: Quinolinate synthase (345 aa).

2 residues coordinate iminosuccinate: His69 and Ser87. Residue Cys132 coordinates [4Fe-4S] cluster. Residues 158 to 160 (YVN) and Ser175 each bind iminosuccinate. Cys217 provides a ligand contact to [4Fe-4S] cluster. Residues 243 to 245 (HPE) and Thr260 contribute to the iminosuccinate site. Cys303 serves as a coordination point for [4Fe-4S] cluster.

It belongs to the quinolinate synthase family. Type 2 subfamily. [4Fe-4S] cluster is required as a cofactor.

The protein localises to the cytoplasm. The catalysed reaction is iminosuccinate + dihydroxyacetone phosphate = quinolinate + phosphate + 2 H2O + H(+). The protein operates within cofactor biosynthesis; NAD(+) biosynthesis; quinolinate from iminoaspartate: step 1/1. Functionally, catalyzes the condensation of iminoaspartate with dihydroxyacetone phosphate to form quinolinate. The chain is Quinolinate synthase from Agrobacterium fabrum (strain C58 / ATCC 33970) (Agrobacterium tumefaciens (strain C58)).